A 346-amino-acid polypeptide reads, in one-letter code: Calcium uniporter protein, mitochondrial (346 aa).

The Mitochondrial matrix portion of the chain corresponds to 1-195 (MTKGKLLTTP…ECDKAAHRGA (195 aa)). The interval 55–120 (ELPPPDPQDS…GEGKDEGEFV (66 aa)) is disordered. 2 stretches are compositionally biased toward basic and acidic residues: residues 76–91 (MEAK…KADT) and 109–119 (REGEGKDEGEF). A helical membrane pass occupies residues 196-216 (QRIALAGCGGLIGYWYIVYRL). The Mitochondrial intermembrane portion of the chain corresponds to 217–226 (TFETDLGWDV). A Selectivity filter motif is present at residues 224 to 232 (WDVMEPVTY). The helical transmembrane segment at 227–248 (MEPVTYLVGLSTLIGGYMWFLW) threads the bilayer. Glu228 serves as a coordination point for Ca(2+). Residues 249–346 (HNREVSYRSA…KEGEEDDEDD (98 aa)) lie on the Mitochondrial matrix side of the membrane. Residues 306–346 (WNETQDEGGDEKVTKALRDERKNNNGTKNKSKEGEEDDEDD) form a disordered region. Positions 315 to 328 (DEKVTKALRDERKN) are enriched in basic and acidic residues.

It belongs to the MCU (TC 1.A.77) family. As to quaternary structure, homotetramer, assembles in a dimer or dimers configuration with two interfaces.

It is found in the mitochondrion inner membrane. It catalyses the reaction Ca(2+)(in) = Ca(2+)(out). In terms of biological role, highly selective calcium channel localized to the inner mitochondrial membrane, which mediates calcium uptake into the mitochondrial matrix. Mitochondrial calcium homeostasis plays key roles in cellular physiology and regulates ATP production, cytoplasmic calcium signals and activation of cell death pathways. Sufficient to operate as a pore-forming channel without the need of calcium-sensor or auxiliary subunit. This is Calcium uniporter protein, mitochondrial from Cyphellophora europaea (strain CBS 101466) (Phialophora europaea).